The chain runs to 105 residues: Large ribosomal subunit protein uL23 (105 aa).

The protein belongs to the universal ribosomal protein uL23 family. As to quaternary structure, part of the 50S ribosomal subunit. Contacts protein L29, and trigger factor when it is bound to the ribosome.

Its function is as follows. One of the early assembly proteins it binds 23S rRNA. One of the proteins that surrounds the polypeptide exit tunnel on the outside of the ribosome. Forms the main docking site for trigger factor binding to the ribosome. The sequence is that of Large ribosomal subunit protein uL23 from Herminiimonas arsenicoxydans.